A 499-amino-acid polypeptide reads, in one-letter code: Transcriptional regulator sdnM (499 aa).

It localises to the nucleus. The protein operates within antibiotic biosynthesis. Transcriptional regulator; part of the gene cluster that mediates the biosynthesis of sordarin and hypoxysordarin, glycoside antibiotics with a unique tetracyclic diterpene aglycone structure. First, the geranylgeranyl diphosphate synthase sdnC constructs GGDP from farnesyl diphosphate and isopentenyl diphosphate. The diterpene cyclase sdnA then catalyzes the cyclization of GGDP to afford cycloaraneosene. Cycloaraneosene is then hydroxylated four times by the putative cytochrome P450 monooxygenases sdnB, sdnE, sdnF and sdnH to give a hydroxylated cycloaraneosene derivative such as cycloaraneosene-8,9,13,19-tetraol. Although the order of the hydroxylations is unclear, at least C8, C9 and C13 of the cycloaraneosene skeleton are hydroxylated before the sordaricin formation. Dehydration of the 13-hydroxy group of the hydroxylated cycloaraneosene derivative might be catalyzed by an unassigned hypothetical protein such as sdnG and sdnP to construct the cyclopentadiene moiety. The FAD-dependent oxidoreductase sdnN is proposed to catalyze the oxidation at C9 of the hydroxylated cycloaraneosene derivative and also catalyze the Baeyer-Villiger oxidation to give the lactone intermediate. The presumed lactone intermediate would be hydrolyzed to give an acrolein moiety and a carboxylate moiety. Then, [4+2]cycloaddition would occur between the acrolein moiety and the cyclopentadiene moiety to give sordaricin. SdnN might also be involved in the [4+2]cycloaddition after the hypothesized oxidation to accommodate the oxidized product and prompt the [4+2]cycloaddition. GDP-6-deoxy-D-altrose may be biosynthesized from GDP-D-mannose by the putative GDP-mannose-4,6-dehydratase sdnI and the short-chain dehydrogenase sdnK. The glycosyltransferase sdnJ catalyzes the attachment of 6-deoxy-D-altrose onto the 19-hydroxy group of sordaricin to give 4'-O-demethylsordarin. The methyltransferase sdnD would complete the biosynthesis of sordarin. Sordarin can be further modified into hypoxysordarin. The unique acyl chain at the 3'-hydroxy group of hypoxysordarin would be constructed by an iterative type I PKS sdnO and the trans-acting polyketide methyltransferase sdnL. SdnL would be responsible for the introduction of an alpha-methyl group of the polyketide chain. Alternatively, the beta-lactamase-like protein sdnR might be responsible for the cleavage and transfer of the polyketide chain from the PKS sdnO to sordarin. Two putative cytochrome P450 monooxygenases, sdnQ and sdnT, might catalyze the epoxidations of the polyketide chain to complete the biosynthesis of hypoxysordarin. Transcriptional regulators sdnM and sdnS are presumably encoded for the transcriptional regulation of the expression of the sdn gene cluster. The chain is Transcriptional regulator sdnM from Sordaria araneosa (Pleurage araneosa).